We begin with the raw amino-acid sequence, 750 residues long: Photosystem I P700 chlorophyll a apoprotein A1 (750 aa).

The next 8 helical transmembrane spans lie at 70 to 93 (VFSAHFGQLSIIFLWLSGMYFHGA), 156 to 179 (LYCTAIGALVFAALMLFAGWFHYH), 195 to 219 (LNHHLAGLLGLGSLSWAGHQVHVSL), 291 to 309 (IAHHHLAIAILFLIAGHMY), 346 to 369 (WHAQLSLNLAMLGSLTIVVAHHMY), 385 to 411 (LSLFTHHMWIGGFLIVGAAAHAAIFMV), 433 to 455 (AIISHLNWACIFLGFHSFGLYIH), and 531 to 549 (FLVHHIHAFTIHVTVLILL). [4Fe-4S] cluster-binding residues include Cys573 and Cys582. 2 consecutive transmembrane segments (helical) span residues 589–610 (HVFLGLFWMYNAISVVIFHFSW) and 664–686 (LSAYGLFFLGAHFVWAFSLMFLF). His675 is a chlorophyll a' binding site. Residues Met683 and Tyr691 each contribute to the chlorophyll a site. Position 692 (Trp692) interacts with phylloquinone. Residues 724–744 (AVGVTHYLLGGIATTWAFFLA) form a helical membrane-spanning segment.

This sequence belongs to the PsaA/PsaB family. The PsaA/B heterodimer binds the P700 chlorophyll special pair and subsequent electron acceptors. PSI consists of a core antenna complex that captures photons, and an electron transfer chain that converts photonic excitation into a charge separation. The eukaryotic PSI reaction center is composed of at least 11 subunits. The cofactor is P700 is a chlorophyll a/chlorophyll a' dimer, A0 is one or more chlorophyll a, A1 is one or both phylloquinones and FX is a shared 4Fe-4S iron-sulfur center..

Its subcellular location is the plastid. It localises to the chloroplast thylakoid membrane. The catalysed reaction is reduced [plastocyanin] + hnu + oxidized [2Fe-2S]-[ferredoxin] = oxidized [plastocyanin] + reduced [2Fe-2S]-[ferredoxin]. In terms of biological role, psaA and PsaB bind P700, the primary electron donor of photosystem I (PSI), as well as the electron acceptors A0, A1 and FX. PSI is a plastocyanin-ferredoxin oxidoreductase, converting photonic excitation into a charge separation, which transfers an electron from the donor P700 chlorophyll pair to the spectroscopically characterized acceptors A0, A1, FX, FA and FB in turn. Oxidized P700 is reduced on the lumenal side of the thylakoid membrane by plastocyanin. This is Photosystem I P700 chlorophyll a apoprotein A1 from Aethionema grandiflorum (Persian stone-cress).